The sequence spans 268 residues: Indole-3-glycerol phosphate synthase (268 aa).

Belongs to the TrpC family.

It catalyses the reaction 1-(2-carboxyphenylamino)-1-deoxy-D-ribulose 5-phosphate + H(+) = (1S,2R)-1-C-(indol-3-yl)glycerol 3-phosphate + CO2 + H2O. It participates in amino-acid biosynthesis; L-tryptophan biosynthesis; L-tryptophan from chorismate: step 4/5. The protein is Indole-3-glycerol phosphate synthase of Acinetobacter baumannii (strain ACICU).